Consider the following 152-residue polypeptide: SsrA-binding protein (152 aa).

It belongs to the SmpB family.

It localises to the cytoplasm. In terms of biological role, required for rescue of stalled ribosomes mediated by trans-translation. Binds to transfer-messenger RNA (tmRNA), required for stable association of tmRNA with ribosomes. tmRNA and SmpB together mimic tRNA shape, replacing the anticodon stem-loop with SmpB. tmRNA is encoded by the ssrA gene; the 2 termini fold to resemble tRNA(Ala) and it encodes a 'tag peptide', a short internal open reading frame. During trans-translation Ala-aminoacylated tmRNA acts like a tRNA, entering the A-site of stalled ribosomes, displacing the stalled mRNA. The ribosome then switches to translate the ORF on the tmRNA; the nascent peptide is terminated with the 'tag peptide' encoded by the tmRNA and targeted for degradation. The ribosome is freed to recommence translation, which seems to be the essential function of trans-translation. The sequence is that of SsrA-binding protein from Gloeobacter violaceus (strain ATCC 29082 / PCC 7421).